A 364-amino-acid polypeptide reads, in one-letter code: GDP-fucose transporter 1 (364 aa).

Transmembrane regions (helical) follow at residues 34–56 (FLLR…ISMV), 76–98 (VTFY…AACC), 111–130 (LRVA…MITF), 140–162 (VAFY…YLLL), 167–185 (SFYA…WLGV), 195–214 (SWLG…LNAI), 227–249 (IWRL…LLLL), and 264–286 (AHFW…VTGL).

Belongs to the TPT transporter family. SLC35C subfamily.

Its subcellular location is the golgi apparatus membrane. It catalyses the reaction GMP(out) + GDP-beta-L-fucose(in) = GMP(in) + GDP-beta-L-fucose(out). Its function is as follows. Antiporter specific for GDP-l-fucose and depending on the concomitant reverse transport of GMP. Involved in GDP-fucose import from the cytoplasm into the Golgi lumen. The sequence is that of GDP-fucose transporter 1 from Homo sapiens (Human).